A 375-amino-acid polypeptide reads, in one-letter code: Tyrosine--tRNA ligase (375 aa).

Residues Tyr37, Tyr168, Gln172, Asp175, and Gln190 each coordinate L-tyrosine. Residues 251 to 255 (KMSKS) carry the 'KMSKS' region motif. Residue Lys254 participates in ATP binding.

Belongs to the class-I aminoacyl-tRNA synthetase family. TyrS type 4 subfamily. As to quaternary structure, homodimer.

Its subcellular location is the cytoplasm. The catalysed reaction is tRNA(Tyr) + L-tyrosine + ATP = L-tyrosyl-tRNA(Tyr) + AMP + diphosphate + H(+). Functionally, catalyzes the attachment of tyrosine to tRNA(Tyr) in a two-step reaction: tyrosine is first activated by ATP to form Tyr-AMP and then transferred to the acceptor end of tRNA(Tyr). In Pyrococcus horikoshii (strain ATCC 700860 / DSM 12428 / JCM 9974 / NBRC 100139 / OT-3), this protein is Tyrosine--tRNA ligase.